Consider the following 702-residue polypeptide: Elongation factor G (702 aa).

The region spanning 8–290 is the tr-type G domain; that stretch reads ERYRNIGISA…AVIEYLPAPT (283 aa). GTP is bound by residues 17-24, 88-92, and 142-145; these read AHIDAGKT, DTPGH, and NKMD.

This sequence belongs to the TRAFAC class translation factor GTPase superfamily. Classic translation factor GTPase family. EF-G/EF-2 subfamily.

It localises to the cytoplasm. In terms of biological role, catalyzes the GTP-dependent ribosomal translocation step during translation elongation. During this step, the ribosome changes from the pre-translocational (PRE) to the post-translocational (POST) state as the newly formed A-site-bound peptidyl-tRNA and P-site-bound deacylated tRNA move to the P and E sites, respectively. Catalyzes the coordinated movement of the two tRNA molecules, the mRNA and conformational changes in the ribosome. The chain is Elongation factor G from Yersinia pseudotuberculosis serotype O:1b (strain IP 31758).